The following is a 304-amino-acid chain: D-alanine--D-alanine ligase (304 aa).

Positions 103–299 (KLIWQALGLP…FADLCIEILK (197 aa)) constitute an ATP-grasp domain. Residue 129 to 184 (EEKLGLPMFVKPAAEGSSVGVVKVKGKGRLKSVYEELKHFQGEIIAERFIGGGEYS) coordinates ATP. Asp-253, Glu-266, and Asn-268 together coordinate Mg(2+).

Belongs to the D-alanine--D-alanine ligase family. The cofactor is Mg(2+). Requires Mn(2+) as cofactor.

The protein localises to the cytoplasm. It catalyses the reaction 2 D-alanine + ATP = D-alanyl-D-alanine + ADP + phosphate + H(+). It functions in the pathway cell wall biogenesis; peptidoglycan biosynthesis. Its function is as follows. Cell wall formation. In Neisseria meningitidis serogroup A / serotype 4A (strain DSM 15465 / Z2491), this protein is D-alanine--D-alanine ligase.